A 423-amino-acid chain; its full sequence is Putative serpin-Z12 (423 aa).

Positions 1–25 (MAALAAGEPFSGRATGGDGGVRSDV) are disordered. The interval 370-394 (GTVAAASTAVVMMQKGSSLPPVDFV) is RCL.

The protein belongs to the serpin family.

Probable serine protease inhibitor. The chain is Putative serpin-Z12 from Oryza sativa subsp. japonica (Rice).